The chain runs to 384 residues: L-cysteine:1D-myo-inositol 2-amino-2-deoxy-alpha-D-glucopyranoside ligase (384 aa).

Cys16 is a Zn(2+) binding site. Residues 16-19 (CGIT), Thr31, and 54-56 (NVT) contribute to the L-cysteinyl-5'-AMP site. Residues 18–28 (ITPYDATHLGH) carry the 'HIGH' region motif. The short motif at 159–164 (QSGGDP) is the 'ERGGDP' region element. Position 199 (Trp199) interacts with L-cysteinyl-5'-AMP. Position 203 (Cys203) interacts with Zn(2+). Position 221 to 223 (221 to 223 (GSD)) interacts with L-cysteinyl-5'-AMP. His228 is a binding site for Zn(2+). Ile255 is a binding site for L-cysteinyl-5'-AMP. Residues 261 to 265 (KMSKS) carry the 'KMSKS' region motif.

Belongs to the class-I aminoacyl-tRNA synthetase family. MshC subfamily. Monomer. Zn(2+) serves as cofactor.

The enzyme catalyses 1D-myo-inositol 2-amino-2-deoxy-alpha-D-glucopyranoside + L-cysteine + ATP = 1D-myo-inositol 2-(L-cysteinylamino)-2-deoxy-alpha-D-glucopyranoside + AMP + diphosphate + H(+). Catalyzes the ATP-dependent condensation of GlcN-Ins and L-cysteine to form L-Cys-GlcN-Ins. This chain is L-cysteine:1D-myo-inositol 2-amino-2-deoxy-alpha-D-glucopyranoside ligase, found in Mycobacterium leprae (strain Br4923).